A 408-amino-acid polypeptide reads, in one-letter code: Tryptophan synthase beta chain (408 aa).

K103 bears the N6-(pyridoxal phosphate)lysine mark.

The protein belongs to the TrpB family. In terms of assembly, tetramer of two alpha and two beta chains. Pyridoxal 5'-phosphate serves as cofactor.

It carries out the reaction (1S,2R)-1-C-(indol-3-yl)glycerol 3-phosphate + L-serine = D-glyceraldehyde 3-phosphate + L-tryptophan + H2O. It functions in the pathway amino-acid biosynthesis; L-tryptophan biosynthesis; L-tryptophan from chorismate: step 5/5. Functionally, the beta subunit is responsible for the synthesis of L-tryptophan from indole and L-serine. The polypeptide is Tryptophan synthase beta chain (Koribacter versatilis (strain Ellin345)).